A 983-amino-acid polypeptide reads, in one-letter code: Protein translocase subunit SecA (983 aa).

Residues Q83, 101–105 (GEGKT), and D489 contribute to the ATP site. Positions 948–983 (ISSEEENNNEKTNININEDLERTKGEAQQTAKNPNE) are disordered. Polar residues predominate over residues 973 to 983 (EAQQTAKNPNE).

It belongs to the SecA family. As to quaternary structure, monomer and homodimer. Part of the essential Sec protein translocation apparatus which comprises SecA, SecYEG and auxiliary proteins SecDF. Other proteins may also be involved.

It localises to the cell membrane. The protein resides in the cytoplasm. It carries out the reaction ATP + H2O + cellular proteinSide 1 = ADP + phosphate + cellular proteinSide 2.. Part of the Sec protein translocase complex. Interacts with the SecYEG preprotein conducting channel. Has a central role in coupling the hydrolysis of ATP to the transfer of proteins into and across the cell membrane, serving as an ATP-driven molecular motor driving the stepwise translocation of polypeptide chains across the membrane. This Mesomycoplasma hyopneumoniae (strain 7448) (Mycoplasma hyopneumoniae) protein is Protein translocase subunit SecA.